The primary structure comprises 52 residues: Large ribosomal subunit protein bL33 (52 aa).

This sequence belongs to the bacterial ribosomal protein bL33 family.

In Chlamydia trachomatis serovar A (strain ATCC VR-571B / DSM 19440 / HAR-13), this protein is Large ribosomal subunit protein bL33.